The chain runs to 407 residues: Phosphoglycerate kinase (407 aa).

Substrate is bound by residues 27-29 (DLN), Arg43, 66-69 (HLGR), Arg125, and Arg165. Residues Lys215, Gly303, Glu334, and 363–366 (GGDS) each bind ATP.

This sequence belongs to the phosphoglycerate kinase family. In terms of assembly, monomer.

The protein localises to the cytoplasm. It catalyses the reaction (2R)-3-phosphoglycerate + ATP = (2R)-3-phospho-glyceroyl phosphate + ADP. It functions in the pathway carbohydrate degradation; glycolysis; pyruvate from D-glyceraldehyde 3-phosphate: step 2/5. The sequence is that of Phosphoglycerate kinase from Mycobacterium sp. (strain JLS).